The chain runs to 273 residues: Phosphate import ATP-binding protein PstB (273 aa).

Residues 27–268 enclose the ABC transporter domain; sequence VTVRNLNFYY…PSDRRTQDYI (242 aa). 59–66 contacts ATP; that stretch reads GPSGCGKS.

This sequence belongs to the ABC transporter superfamily. Phosphate importer (TC 3.A.1.7) family. As to quaternary structure, the complex is composed of two ATP-binding proteins (PstB), two transmembrane proteins (PstC and PstA) and a solute-binding protein (PstS).

It is found in the cell inner membrane. The enzyme catalyses phosphate(out) + ATP + H2O = ADP + 2 phosphate(in) + H(+). Part of the ABC transporter complex PstSACB involved in phosphate import. Responsible for energy coupling to the transport system. In Bradyrhizobium diazoefficiens (strain JCM 10833 / BCRC 13528 / IAM 13628 / NBRC 14792 / USDA 110), this protein is Phosphate import ATP-binding protein PstB.